A 41-amino-acid chain; its full sequence is Peroxidase 3 (41 aa).

The protein belongs to the peroxidase family. Classical plant (class III) peroxidase subfamily. Requires heme b as cofactor. Ca(2+) is required as a cofactor.

The protein localises to the secreted. The catalysed reaction is 2 a phenolic donor + H2O2 = 2 a phenolic radical donor + 2 H2O. Functionally, removal of H(2)O(2), oxidation of toxic reductants, biosynthesis and degradation of lignin, suberization, auxin catabolism, response to environmental stresses such as wounding, pathogen attack and oxidative stress. These functions might be dependent on each isozyme/isoform in each plant tissue. The protein is Peroxidase 3 of Vitis vinifera (Grape).